We begin with the raw amino-acid sequence, 209 residues long: Thiamine-phosphate synthase 1 (209 aa).

4-amino-2-methyl-5-(diphosphooxymethyl)pyrimidine contacts are provided by residues 39 to 43 and N74; that span reads QFREK. D75 and D94 together coordinate Mg(2+). S112 lines the 4-amino-2-methyl-5-(diphosphooxymethyl)pyrimidine pocket. Position 138 to 140 (138 to 140) interacts with 2-[(2R,5Z)-2-carboxy-4-methylthiazol-5(2H)-ylidene]ethyl phosphate; it reads TQS. 4-amino-2-methyl-5-(diphosphooxymethyl)pyrimidine is bound at residue K141. Residues G170 and 190-191 each bind 2-[(2R,5Z)-2-carboxy-4-methylthiazol-5(2H)-ylidene]ethyl phosphate; that span reads IS.

The protein belongs to the thiamine-phosphate synthase family. The cofactor is Mg(2+).

It catalyses the reaction 2-[(2R,5Z)-2-carboxy-4-methylthiazol-5(2H)-ylidene]ethyl phosphate + 4-amino-2-methyl-5-(diphosphooxymethyl)pyrimidine + 2 H(+) = thiamine phosphate + CO2 + diphosphate. It carries out the reaction 2-(2-carboxy-4-methylthiazol-5-yl)ethyl phosphate + 4-amino-2-methyl-5-(diphosphooxymethyl)pyrimidine + 2 H(+) = thiamine phosphate + CO2 + diphosphate. The enzyme catalyses 4-methyl-5-(2-phosphooxyethyl)-thiazole + 4-amino-2-methyl-5-(diphosphooxymethyl)pyrimidine + H(+) = thiamine phosphate + diphosphate. It functions in the pathway cofactor biosynthesis; thiamine diphosphate biosynthesis; thiamine phosphate from 4-amino-2-methyl-5-diphosphomethylpyrimidine and 4-methyl-5-(2-phosphoethyl)-thiazole: step 1/1. Its function is as follows. Condenses 4-methyl-5-(beta-hydroxyethyl)thiazole monophosphate (THZ-P) and 2-methyl-4-amino-5-hydroxymethyl pyrimidine pyrophosphate (HMP-PP) to form thiamine monophosphate (TMP). The protein is Thiamine-phosphate synthase 1 of Streptococcus pneumoniae (strain ATCC BAA-255 / R6).